Here is a 256-residue protein sequence, read N- to C-terminus: Probable S-methyl-5'-thioinosine phosphorylase (256 aa).

Residues Thr10 and 47–48 (RH) contribute to the phosphate site. Met178 serves as a coordination point for substrate. Phosphate is bound at residue Thr179. Substrate is bound at residue 202–204 (NYA).

This sequence belongs to the PNP/MTAP phosphorylase family. MTAP subfamily. In terms of assembly, homotrimer.

The catalysed reaction is S-methyl-5'-thioinosine + phosphate = 5-(methylsulfanyl)-alpha-D-ribose 1-phosphate + hypoxanthine. The protein operates within purine metabolism; purine nucleoside salvage. In terms of biological role, catalyzes the reversible phosphorylation of S-methyl-5'-thioinosine (MTI) to hypoxanthine and 5-methylthioribose-1-phosphate. Involved in the breakdown of S-methyl-5'-thioadenosine (MTA), a major by-product of polyamine biosynthesis. Catabolism of (MTA) occurs via deamination to MTI and phosphorolysis to hypoxanthine. The protein is Probable S-methyl-5'-thioinosine phosphorylase of Methanopyrus kandleri (strain AV19 / DSM 6324 / JCM 9639 / NBRC 100938).